Reading from the N-terminus, the 2120-residue chain is Separin (2120 aa).

Residue S1126 is modified to Phosphoserine. Residues I1299 to Q1355 are disordered. Phosphoserine is present on residues S1396 and S1399. Disordered stretches follow at residues A1412–M1485 and G1507–R1561. Basic residues-rich tracts occupy residues R1418–L1432 and R1454–S1463. Basic and acidic residues predominate over residues R1464–R1473. S1508 bears the Phosphoserine mark. Residues P1548 to P1558 are compositionally biased toward basic and acidic residues. The Peptidase C50 domain occupies P1945–L2040. C2029 is an active-site residue.

In terms of assembly, interacts with PTTG1. Interacts with RAD21. Post-translationally, autocleaves. This function, which is not essential for its protease activity, is unknown. In terms of processing, phosphorylated by CDK1. There are 8 Ser/Thr phosphorylation sites. Among them, Ser-1126 phosphorylation is the major site, which conducts to the enzyme inactivation.

It is found in the cytoplasm. The protein resides in the nucleus. The catalysed reaction is All bonds known to be hydrolyzed by this endopeptidase have arginine in P1 and an acidic residue in P4. P6 is often occupied by an acidic residue or by a hydroxy-amino-acid residue, the phosphorylation of which enhances cleavage.. Its activity is regulated as follows. Regulated by at least two independent mechanisms. First, it is inactivated via its interaction with securin/PTTG1, which probably covers its active site. The association with PTTG1 is not only inhibitory, since PTTG1 is also required for activating it, the enzyme being inactive in cells in which PTTG1 is absent. PTTG1 degradation at anaphase, liberates it and triggers RAD21 cleavage. Second, phosphorylation at Ser-1126 inactivates it. The complete phosphorylation during mitosis, is removed when cells undergo anaphase. Activation of the enzyme at the metaphase-anaphase transition probably requires the removal of both securin and inhibitory phosphate. Functionally, caspase-like protease, which plays a central role in the chromosome segregation by cleaving the SCC1/RAD21 subunit of the cohesin complex at the onset of anaphase. During most of the cell cycle, it is inactivated by different mechanisms. In Homo sapiens (Human), this protein is Separin (ESPL1).